A 93-amino-acid polypeptide reads, in one-letter code: MATHKPINILEAFAAAPPPLDYVLPNMVAGTVGALVSPGGAGKSMLALQLAAQIAGGPDLLEVGELPTGPVIYLPAEDPPTAIHHRLHALGAH.

Its function is as follows. This protein is involved in regulating the plasmid copy-number. Increasing the level of this protein results in a higher plasmid copy-number. This Escherichia coli protein is Regulatory protein RepI (repI).